Here is a 303-residue protein sequence, read N- to C-terminus: Crk-like protein (303 aa).

An SH2 domain is found at 14-102 (WYMGPVSRQE…LDTTTLIEPA (89 aa)). Residues 123 to 183 (ENLEYVRTLY…PVPYVEKLVR (61 aa)) enclose the SH3 1 domain. A Phosphotyrosine modification is found at Tyr-127. A disordered region spans residues 184–204 (SSPHGKHGNRNSNSYGIPEPA). The residue at position 207 (Tyr-207) is a Phosphotyrosine. Positions 235–296 (NGPVFAKAIQ…PFTHVKIFDP (62 aa)) constitute an SH3 2 domain.

It belongs to the CRK family. Interacts with INPP5D/SHIP1. Interacts with DOCK2 and EPOR. Interacts with phosphorylated CBLB and IRS4. Interacts with BCAR1/CAS and NEDD9/HEF1.

In terms of biological role, may mediate the transduction of intracellular signals. The sequence is that of Crk-like protein from Rattus norvegicus (Rat).